The sequence spans 553 residues: MVDMGALDNLIANTAYLQARKPSDCDSKELQRRRRSLALPGLQGCAELRQKLSLNFHSLCEQQPIGRRLFRDFLATVPTFRKAATFLEDVQNWELAEEGPTKDSALQGLVATCASAPAPGNPQPFLSQAVATKCQAATTEEERVAAVTLAKAEAMAFLQEQPFKDFVTSAFYDKFLQWKLFEMQPVSDKYFTEFRVLGKGGFGEVCAVQVKNTGKMYACKKLDKKRLKKKGGEKMALLEKEILEKVSSPFIVSLAYAFESKTHLCLVMSLMNGGDLKFHIYNVGTRGLDMSRVIFYSAQIACGMLHLHELGIVYRDMKPENVLLDDLGNCRLSDLGLAVEMKGGKPITQRAGTNGYMAPEILMEKVSYSYPVDWFAMGCSIYEMVAGRTPFKDYKEKVSKEDLKQRTLQDEVKFQHDNFTEEAKDICRLFLAKKPEQRLGSREKSDDPRKHHFFKTINFPRLEAGLIEPPFVPDPSVVYAKDIAEIDDFSEVRGVEFDDKDKQFFKNFATGAVPIAWQEEIIETGLFEELNDPNRPTGCEEGNSSKSGVCLLL.

Position 36 is a phosphoserine; by PKA (Ser36). An RGS domain is found at 56 to 176 (FHSLCEQQPI…VTSAFYDKFL (121 aa)). The region spanning 191 to 454 (FTEFRVLGKG…SDDPRKHHFF (264 aa)) is the Protein kinase domain. ATP contacts are provided by residues 197–205 (LGKGGFGEV) and Lys220. Residue Asp316 is the Proton acceptor of the active site. Positions 455–520 (KTINFPRLEA…GAVPIAWQEE (66 aa)) constitute an AGC-kinase C-terminal domain. Position 550 is a cysteine methyl ester (Cys550). Residue Cys550 is the site of S-geranylgeranyl cysteine attachment. A propeptide spans 551–553 (LLL) (removed in mature form).

Belongs to the protein kinase superfamily. AGC Ser/Thr protein kinase family. GPRK subfamily. Interacts (when prenylated) with PDE6D; this promotes release from membranes. Autophosphorylated in vitro at Ser-490. Phosphorylation at Ser-36 is regulated by light and activated by cAMP. In terms of tissue distribution, retinal cones, outer and inner segments.

Its subcellular location is the membrane. It carries out the reaction L-threonyl-[rhodopsin] + ATP = O-phospho-L-threonyl-[rhodopsin] + ADP + H(+). It catalyses the reaction L-seryl-[rhodopsin] + ATP = O-phospho-L-seryl-[rhodopsin] + ADP + H(+). With respect to regulation, inhibited by phosphorylation of Ser-36. Its function is as follows. Retina-specific kinase involved in the shutoff of the photoresponse and adaptation to changing light conditions via cone opsin phosphorylation, including rhodopsin (RHO). This Homo sapiens (Human) protein is Rhodopsin kinase GRK7 (GRK7).